The following is a 372-amino-acid chain: Histidinol-phosphate aminotransferase (372 aa).

Position 229 is an N6-(pyridoxal phosphate)lysine (lysine 229).

This sequence belongs to the class-II pyridoxal-phosphate-dependent aminotransferase family. Histidinol-phosphate aminotransferase subfamily. Homodimer. The cofactor is pyridoxal 5'-phosphate.

It catalyses the reaction L-histidinol phosphate + 2-oxoglutarate = 3-(imidazol-4-yl)-2-oxopropyl phosphate + L-glutamate. Its pathway is amino-acid biosynthesis; L-histidine biosynthesis; L-histidine from 5-phospho-alpha-D-ribose 1-diphosphate: step 7/9. This Bdellovibrio bacteriovorus (strain ATCC 15356 / DSM 50701 / NCIMB 9529 / HD100) protein is Histidinol-phosphate aminotransferase.